We begin with the raw amino-acid sequence, 317 residues long: Ribosomal RNA small subunit methyltransferase H (317 aa).

S-adenosyl-L-methionine contacts are provided by residues 30-32 (GGH), aspartate 50, tyrosine 78, aspartate 95, and glutamine 102.

It belongs to the methyltransferase superfamily. RsmH family.

It is found in the cytoplasm. The enzyme catalyses cytidine(1402) in 16S rRNA + S-adenosyl-L-methionine = N(4)-methylcytidine(1402) in 16S rRNA + S-adenosyl-L-homocysteine + H(+). Specifically methylates the N4 position of cytidine in position 1402 (C1402) of 16S rRNA. In Nitrosomonas eutropha (strain DSM 101675 / C91 / Nm57), this protein is Ribosomal RNA small subunit methyltransferase H.